We begin with the raw amino-acid sequence, 156 residues long: Small ribosomal subunit protein uS7 (156 aa).

This sequence belongs to the universal ribosomal protein uS7 family. As to quaternary structure, part of the 30S ribosomal subunit. Contacts proteins S9 and S11.

In terms of biological role, one of the primary rRNA binding proteins, it binds directly to 16S rRNA where it nucleates assembly of the head domain of the 30S subunit. Is located at the subunit interface close to the decoding center, probably blocks exit of the E-site tRNA. The chain is Small ribosomal subunit protein uS7 from Cellvibrio japonicus (strain Ueda107) (Pseudomonas fluorescens subsp. cellulosa).